A 503-amino-acid polypeptide reads, in one-letter code: Ribonuclease Y (503 aa).

The chain crosses the membrane as a helical span at residues 2–22 (GIIIGLIIVSVALIISLCSLL). The 61-residue stretch at 193–253 (TTNLVKLPND…IRREIATKTL (61 aa)) folds into the KH domain. The HD domain maps to 319–412 (VLLHSVEVAK…VAIADAISAS (94 aa)).

The protein belongs to the RNase Y family.

The protein localises to the cell membrane. Functionally, endoribonuclease that initiates mRNA decay. This is Ribonuclease Y from Mesoplasma florum (strain ATCC 33453 / NBRC 100688 / NCTC 11704 / L1) (Acholeplasma florum).